Consider the following 506-residue polypeptide: Maturase K (506 aa).

This sequence belongs to the intron maturase 2 family. MatK subfamily.

It is found in the plastid. The protein localises to the chloroplast. Functionally, usually encoded in the trnK tRNA gene intron. Probably assists in splicing its own and other chloroplast group II introns. The protein is Maturase K of Artanema fimbriatum.